We begin with the raw amino-acid sequence, 299 residues long: tRNA dimethylallyltransferase (299 aa).

13–20 (GPTASGKT) contacts ATP. Substrate is bound at residue 15–20 (TASGKT). Residues 38–41 (DSRQ) are interaction with substrate tRNA.

It belongs to the IPP transferase family. In terms of assembly, monomer. It depends on Mg(2+) as a cofactor.

The catalysed reaction is adenosine(37) in tRNA + dimethylallyl diphosphate = N(6)-dimethylallyladenosine(37) in tRNA + diphosphate. In terms of biological role, catalyzes the transfer of a dimethylallyl group onto the adenine at position 37 in tRNAs that read codons beginning with uridine, leading to the formation of N6-(dimethylallyl)adenosine (i(6)A). The protein is tRNA dimethylallyltransferase of Prochlorococcus marinus (strain MIT 9313).